We begin with the raw amino-acid sequence, 273 residues long: Dermonecrotic toxin LhSicTox-alphaIA2bii (273 aa).

Residue His5 is part of the active site. Mg(2+)-binding residues include Glu25 and Asp27. His41 serves as the catalytic Nucleophile. Disulfide bonds link Cys45–Cys51 and Cys47–Cys190. Asp85 contributes to the Mg(2+) binding site.

The protein belongs to the arthropod phospholipase D family. Class II subfamily. It depends on Mg(2+) as a cofactor. In terms of tissue distribution, expressed by the venom gland.

It is found in the secreted. The catalysed reaction is an N-(acyl)-sphingosylphosphocholine = an N-(acyl)-sphingosyl-1,3-cyclic phosphate + choline. It catalyses the reaction an N-(acyl)-sphingosylphosphoethanolamine = an N-(acyl)-sphingosyl-1,3-cyclic phosphate + ethanolamine. The enzyme catalyses a 1-acyl-sn-glycero-3-phosphocholine = a 1-acyl-sn-glycero-2,3-cyclic phosphate + choline. It carries out the reaction a 1-acyl-sn-glycero-3-phosphoethanolamine = a 1-acyl-sn-glycero-2,3-cyclic phosphate + ethanolamine. In terms of biological role, dermonecrotic toxins cleave the phosphodiester linkage between the phosphate and headgroup of certain phospholipids (sphingolipid and lysolipid substrates), forming an alcohol (often choline) and a cyclic phosphate. This toxin acts on sphingomyelin (SM). It may also act on ceramide phosphoethanolamine (CPE), lysophosphatidylcholine (LPC) and lysophosphatidylethanolamine (LPE), but not on lysophosphatidylserine (LPS), and lysophosphatidylglycerol (LPG). It acts by transphosphatidylation, releasing exclusively cyclic phosphate products as second products. Induces dermonecrosis, hemolysis, increased vascular permeability, edema, inflammatory response, and platelet aggregation. This chain is Dermonecrotic toxin LhSicTox-alphaIA2bii, found in Loxosceles hirsuta (Recluse spider).